The primary structure comprises 315 residues: Tyrosine recombinase XerC (315 aa).

In terms of domain architecture, Core-binding (CB) spans 1-103; that stretch reads MIASFYAFLD…AIKSFAKFCV (103 aa). Positions 124-306 constitute a Tyr recombinase domain; sequence ELPSPLTYEQ…SMKLKKQIHD (183 aa). Residues arginine 164, lysine 188, histidine 258, arginine 261, and histidine 284 contribute to the active site. The active-site O-(3'-phospho-DNA)-tyrosine intermediate is tyrosine 293.

It belongs to the 'phage' integrase family. XerC subfamily. In terms of assembly, forms a cyclic heterotetrameric complex composed of two molecules of XerC and two molecules of XerD.

The protein localises to the cytoplasm. Functionally, site-specific tyrosine recombinase, which acts by catalyzing the cutting and rejoining of the recombining DNA molecules. The XerC-XerD complex is essential to convert dimers of the bacterial chromosome into monomers to permit their segregation at cell division. It also contributes to the segregational stability of plasmids. In Chlamydia muridarum (strain MoPn / Nigg), this protein is Tyrosine recombinase XerC.